A 99-amino-acid polypeptide reads, in one-letter code: MKSIDPRHYDVIVSPVVTEKATMASEHNKVVFKVQSGATKPQIKEAVEKLFDVKVKSVNTLVRKGKSKSFRGTFGTQSDVKRAVVTLEEGHRIDVTTGL.

Belongs to the universal ribosomal protein uL23 family. Part of the 50S ribosomal subunit. Contacts protein L29, and trigger factor when it is bound to the ribosome.

One of the early assembly proteins it binds 23S rRNA. One of the proteins that surrounds the polypeptide exit tunnel on the outside of the ribosome. Forms the main docking site for trigger factor binding to the ribosome. This is Large ribosomal subunit protein uL23 from Rhodopseudomonas palustris (strain HaA2).